The sequence spans 263 residues: Purine nucleoside phosphorylase SACOL1200 (263 aa).

Zn(2+)-binding residues include H79, C124, and H141.

The protein belongs to the purine nucleoside phosphorylase YfiH/LACC1 family. Homodimer. The cofactor is Cu(2+). Zn(2+) is required as a cofactor.

It catalyses the reaction adenosine + phosphate = alpha-D-ribose 1-phosphate + adenine. The catalysed reaction is S-methyl-5'-thioadenosine + phosphate = 5-(methylsulfanyl)-alpha-D-ribose 1-phosphate + adenine. The enzyme catalyses inosine + phosphate = alpha-D-ribose 1-phosphate + hypoxanthine. It carries out the reaction adenosine + H2O + H(+) = inosine + NH4(+). In terms of biological role, purine nucleoside enzyme that catalyzes the phosphorolysis of adenosine and inosine nucleosides, yielding D-ribose 1-phosphate and the respective free bases, adenine and hypoxanthine. Also catalyzes the phosphorolysis of S-methyl-5'-thioadenosine into adenine and S-methyl-5-thio-alpha-D-ribose 1-phosphate. Also has adenosine deaminase activity. In Staphylococcus aureus (strain COL), this protein is Purine nucleoside phosphorylase SACOL1200.